The primary structure comprises 93 residues: Mitochondrial import inner membrane translocase subunit TIM10 (93 aa).

Positions 1 to 31 (MSFLGFGGGQPQLSSQQKIQAAEAELDLVTD) are interaction with transmembrane regions of transmembrane proteins in transit. Residues 40–65 (CYKKCINTSYSEGELNKNESSCLDRC) carry the Twin CX3C motif motif. 2 disulfides stabilise this stretch: Cys40/Cys65 and Cys44/Cys61. Residues 73-93 (NVQVGENMQKMGQSFNAAGKF) form a required for heterohexamerization region.

It belongs to the small Tim family. In terms of assembly, heterohexamer; composed of 3 copies of TIM9 and 3 copies of TIM10, named soluble 70 kDa complex. Associates directly with the TIM12 component of the TIM22 complex, whose core is composed of TIM18, TIM22 and TIM54. Interacts with the transmembrane regions of multi-pass transmembrane proteins in transit.

It is found in the mitochondrion inner membrane. The protein resides in the mitochondrion intermembrane space. Its function is as follows. Mitochondrial intermembrane chaperone that participates in the import and insertion of multi-pass transmembrane proteins into the mitochondrial inner membrane. Also required for the transfer of beta-barrel precursors from the TOM complex to the sorting and assembly machinery (SAM complex) of the outer membrane. Acts as a chaperone-like protein that protects the hydrophobic precursors from aggregation and guide them through the mitochondrial intermembrane space. Compared to TIM9, it may function as a substrate sensor. The chain is Mitochondrial import inner membrane translocase subunit TIM10 (TIM10) from Saccharomyces cerevisiae (strain ATCC 204508 / S288c) (Baker's yeast).